The following is a 131-amino-acid chain: MIADRIIEHGTLITRDGRAAVEVRIPWYRALPGSCIAGAALTVDGVAAPEDTLRWTMNNRTFSFEELVDETGEWWFPLDSAVLSGDLPVWDDQAEHEVRVDLKLCIPYIITDHGVLHIEEHDTKTMKVAQQ.

This sequence belongs to the C-glycoside deglycosidase beta subunit family. In terms of assembly, heterodimer composed of an alpha subunit (CarB1) and a beta subunit (CarC1). The cofactor is Mg(2+).

It carries out the reaction 3''-dehydroisovitexin = 1,5-anhydro-D-erythro-hex-1-en-3-ulose + apigenin. Its activity is regulated as follows. Activity is strongly reduced in the presence of chelating agents. Functionally, carbon-carbon bond-cleaving enzyme which participates in the metabolism of C-glycosides. Acts on the C6-glycosylated compound 3''-dehydroisovitexin (3''-oxo-isovitexin). Shows weak activity with 3''-dehydroisoorientin (3''-oxo-homoorientin) and 3'-dehydromangiferin (3'-oxo-mangiferin). This Arthrobacter globiformis (strain ATCC 8010 / DSM 20124 / JCM 1332 / NBRC 12137 / NCIMB 8907 / NRRL B-2979 / 168) protein is C-glycoside deglycosidase beta subunit.